A 276-amino-acid chain; its full sequence is Diaminopimelate epimerase (276 aa).

Substrate is bound by residues Asn13, Gln46, and Asn66. Cys75 (proton donor) is an active-site residue. Substrate-binding positions include 76–77 (GN), Asn159, Asn192, and 210–211 (ER). The active-site Proton acceptor is Cys219. Residue 220 to 221 (GT) coordinates substrate.

The protein belongs to the diaminopimelate epimerase family. As to quaternary structure, homodimer.

It is found in the cytoplasm. The catalysed reaction is (2S,6S)-2,6-diaminopimelate = meso-2,6-diaminopimelate. It participates in amino-acid biosynthesis; L-lysine biosynthesis via DAP pathway; DL-2,6-diaminopimelate from LL-2,6-diaminopimelate: step 1/1. Functionally, catalyzes the stereoinversion of LL-2,6-diaminopimelate (L,L-DAP) to meso-diaminopimelate (meso-DAP), a precursor of L-lysine and an essential component of the bacterial peptidoglycan. In Tolumonas auensis (strain DSM 9187 / NBRC 110442 / TA 4), this protein is Diaminopimelate epimerase.